The following is a 542-amino-acid chain: Chaperonin GroEL 2 (542 aa).

ATP-binding positions include 30 to 33 (TLGP), Lys-51, 87 to 91 (DGTTT), Gly-415, and Asp-496.

It belongs to the chaperonin (HSP60) family. In terms of assembly, forms a cylinder of 14 subunits composed of two heptameric rings stacked back-to-back. Interacts with the co-chaperonin GroES.

It localises to the cytoplasm. The catalysed reaction is ATP + H2O + a folded polypeptide = ADP + phosphate + an unfolded polypeptide.. Together with its co-chaperonin GroES, plays an essential role in assisting protein folding. The GroEL-GroES system forms a nano-cage that allows encapsulation of the non-native substrate proteins and provides a physical environment optimized to promote and accelerate protein folding. The polypeptide is Chaperonin GroEL 2 (Azorhizobium caulinodans (strain ATCC 43989 / DSM 5975 / JCM 20966 / LMG 6465 / NBRC 14845 / NCIMB 13405 / ORS 571)).